A 416-amino-acid polypeptide reads, in one-letter code: Formyl-CoA:oxalate CoA-transferase (416 aa).

CoA contacts are provided by residues 17-18, R38, 72-75, 96-98, H104, and 137-140; these read QS, LNTK, NFH, and KAYE. The Nucleophile role is filled by D169. A substrate-binding site is contributed by 248-250; sequence GGQ. 273–275 is a binding site for CoA; it reads QEQ.

Belongs to the CoA-transferase III family. Frc subfamily. Homodimer.

The enzyme catalyses formyl-CoA + oxalate = oxalyl-CoA + formate. Its pathway is metabolic intermediate degradation; oxalate degradation; CO(2) and formate from oxalate: step 1/2. Involved in the catabolism of oxalate and in the adapatation to low pH via the induction of the oxalate-dependent acid tolerance response (ATR). Catalyzes the transfer of the CoA moiety from formyl-CoA to oxalate. This is Formyl-CoA:oxalate CoA-transferase from Escherichia coli O6:H1 (strain CFT073 / ATCC 700928 / UPEC).